The sequence spans 346 residues: DNA-directed RNA polymerases I and III subunit RPAC1 (346 aa).

Ala2 carries the N-acetylalanine modification. Ser4 is modified (phosphoserine).

The protein belongs to the archaeal Rpo3/eukaryotic RPB3 RNA polymerase subunit family. In terms of assembly, component of the RNA polymerase I and RNA polymerase III complexes consisting of at least 13 and 17 subunits, respectively. Pol I complex consists of a ten-subunit catalytic core composed of POLR1A/RPA1, POLR1B/RPA2, POLR1C/RPAC1, POLR1D/RPAC2, POLR1H/RPA12, POLR2E/RPABC1, POLR2F/RPABC2, POLR2H/RPABC3, POLR2K/RPABC4 and POLR2L/RPABC5; a mobile stalk subunit POLR1F/RPA43 protruding from the core and additional subunits homologous to general transcription factors POLR1E/RPA49 and POLR1G/RPA34. Part of Pol I pre-initiation complex (PIC), in which Pol I core assembles with RRN3 and promoter-bound UTBF and SL1/TIF-IB complex. Pol III complex consists of a ten-subunit catalytic core composed of POLR3A/RPC1, POLR3B/RPC2, POLR1C/RPAC1, POLR1D/RPAC2, POLR3K/RPC10, POLR2E/RPABC1, POLR2F/RPABC2, POLR2H/RPABC3, POLR2K/RPABC4 and POLR2L/RPABC5; a mobile stalk composed of two subunits POLR3H/RPC8 and CRCP/RPC9, protruding from the core and functioning primarily in transcription initiation; and additional subunits homologous to general transcription factors of the RNA polymerase II machinery, POLR3C/RPC3-POLR3F/RPC6-POLR3G/RPC7 heterotrimer required for transcription initiation and POLR3D/RPC4-POLR3E/RPC5 heterodimer involved in both transcription initiation and termination.

The protein localises to the nucleus. Its subcellular location is the nucleolus. It is found in the cytoplasm. It localises to the cytosol. In terms of biological role, DNA-dependent RNA polymerase catalyzes the transcription of DNA into RNA using the four ribonucleoside triphosphates as substrates. Common component of RNA polymerases I and III which synthesize ribosomal RNA precursors and short non-coding RNAs including 5S rRNA, snRNAs, tRNAs and miRNAs, respectively. POLR1C/RPAC1 is part of the polymerase core and may function as a clamp element that moves to open and close the cleft. The polypeptide is DNA-directed RNA polymerases I and III subunit RPAC1 (Homo sapiens (Human)).